Reading from the N-terminus, the 221-residue chain is uncharacterized protein (221 aa).

It to E.coli YheO.

This is an uncharacterized protein from Haemophilus influenzae (strain ATCC 51907 / DSM 11121 / KW20 / Rd).